The primary structure comprises 163 residues: Regulatory protein RecX (163 aa).

A disordered region spans residues 1-21 (MSDAEDIPTGRKRRPREQTPV).

This sequence belongs to the RecX family.

It localises to the cytoplasm. Modulates RecA activity. The sequence is that of Regulatory protein RecX from Stenotrophomonas maltophilia (strain R551-3).